The sequence spans 452 residues: Glutamyl-tRNA(Gln) amidotransferase subunit A (452 aa).

Catalysis depends on charge relay system residues K56 and S131. S155 functions as the Acyl-ester intermediate in the catalytic mechanism.

Belongs to the amidase family. GatA subfamily. In terms of assembly, heterotrimer of A, B and C subunits.

The catalysed reaction is L-glutamyl-tRNA(Gln) + L-glutamine + ATP + H2O = L-glutaminyl-tRNA(Gln) + L-glutamate + ADP + phosphate + H(+). Functionally, allows the formation of correctly charged Gln-tRNA(Gln) through the transamidation of misacylated Glu-tRNA(Gln) in organisms which lack glutaminyl-tRNA synthetase. The reaction takes place in the presence of glutamine and ATP through an activated gamma-phospho-Glu-tRNA(Gln). The polypeptide is Glutamyl-tRNA(Gln) amidotransferase subunit A (Campylobacter curvus (strain 525.92)).